Reading from the N-terminus, the 271-residue chain is Phosphatidylglycerol--prolipoprotein diacylglyceryl transferase (271 aa).

Helical transmembrane passes span 25 to 45 (WYGI…KFFV), 60 to 80 (YFIW…ILIY), 103 to 123 (FVGI…IATL), and 131 to 151 (ANPW…YVFG). A 1,2-diacyl-sn-glycero-3-phospho-(1'-sn-glycerol) is bound at residue R152. The next 3 membrane-spanning stretches (helical) occupy residues 181-201 (PSQL…VYLA), 209-229 (GELI…CEFY), and 235-255 (GIGF…IMFI).

The protein belongs to the Lgt family.

The protein resides in the cell inner membrane. The catalysed reaction is L-cysteinyl-[prolipoprotein] + a 1,2-diacyl-sn-glycero-3-phospho-(1'-sn-glycerol) = an S-1,2-diacyl-sn-glyceryl-L-cysteinyl-[prolipoprotein] + sn-glycerol 1-phosphate + H(+). The protein operates within protein modification; lipoprotein biosynthesis (diacylglyceryl transfer). In terms of biological role, catalyzes the transfer of the diacylglyceryl group from phosphatidylglycerol to the sulfhydryl group of the N-terminal cysteine of a prolipoprotein, the first step in the formation of mature lipoproteins. The polypeptide is Phosphatidylglycerol--prolipoprotein diacylglyceryl transferase (Campylobacter jejuni (strain RM1221)).